The primary structure comprises 1132 residues: Protein CROWDED NUCLEI 1 (1132 aa).

Residues 1–31 (MSTPLKVWQRWSTPTKATNPDSNGSSHGTGL) form a disordered region. Residues 10–28 (RWSTPTKATNPDSNGSSHG) are compositionally biased toward polar residues. Positions 73-714 (LLIEKKEWSS…KKLKEQREQF (642 aa)) form a coiled coil. 2 consecutive short sequence motifs (nuclear localization signal) follow at residues 379–386 (EKREAEWK) and 693–700 (IRKDVDDL). Phosphoserine is present on residues S774 and S803. Residues 849–859 (AESETGTKEVE) show a composition bias toward basic and acidic residues. Disordered stretches follow at residues 849-871 (AESE…DQSD), 883-909 (SLSN…TRSV), 924-1039 (INLY…VQQE), and 1061-1132 (GVST…FLTT). The span at 861-871 (TNVNSDGDQSD) shows a compositional bias: polar residues. 2 positions are modified to phosphoserine: S865 and S883. Residues 895 to 907 (MKGKGKARTRRTR) show a composition bias toward basic residues. S908 carries the phosphoserine modification. Phosphoserine is present on residues S1093, S1105, and S1112. Over residues 1095–1105 (DVNKTPLRADS) the composition is skewed to basic and acidic residues.

Belongs to the CRWN family. As to quaternary structure, core component of the LINC complex which is composed of inner nuclear membrane SUN domain-containing proteins coupled to outer nuclear membrane WIP and WIT proteins. The LINC complex also involves nucleoskeletal proteins CRWN/LINC and possibly KAKU4 and the cytoskeletal myosin KAKU1. Interacts with SUN1 and SUN2. Binds to KAKU4. In terms of tissue distribution, expressed at low levels in roots, leaves, flowers and flower stalks.

Its subcellular location is the nucleus membrane. It localises to the nucleus. It is found in the nucleoplasm. The protein localises to the nucleus lamina. In terms of biological role, component of SUN-protein-containing multivariate complexes also called LINC complexes which link the nucleoskeleton and cytoskeleton by providing versatile outer nuclear membrane attachment sites for cytoskeletal filaments. Required for nucleus structure organization (e.g. size and shape). The chain is Protein CROWDED NUCLEI 1 from Arabidopsis thaliana (Mouse-ear cress).